A 202-amino-acid chain; its full sequence is Securin (202 aa).

Residue alanine 2 is modified to N-acetylalanine. The disordered stretch occupies residues 35–94; it reads LDGRSQVSTPRFGKTFDAPPALPKATRKALGTVNRATEKSVKTKGPLKQKQPSFSAKKMT. The short motif at 61-64 is the D-box element; that stretch reads RKAL. 2 short sequence motifs (TEK-box) span residues 71-73 and 94-96; these read TEK. Residues 163 to 173 carry the SH3-binding motif; the sequence is PPSPVRMPSPP. Serine 165 carries the post-translational modification Phosphoserine; by CDK1.

Belongs to the securin family. Interacts with RPS10 and DNAJA1. Interacts with the caspase-like ESPL1, and prevents its protease activity probably by covering its active site. Interacts with TP53 and blocks its activity probably by blocking its binding to DNA. Interacts with the Ku 70 kDa subunit of ds-DNA kinase. Interacts with PTTG1IP. Phosphorylated at Ser-165 by CDK1 during mitosis. In terms of processing, phosphorylated in vitro by ds-DNA kinase. Post-translationally, ubiquitinated through 'Lys-11' linkage of ubiquitin moieties by the anaphase promoting complex (APC) at the onset of anaphase, conducting to its degradation. 'Lys-11'-linked ubiquitination is mediated by the E2 ligase UBE2C/UBCH10.

The protein resides in the cytoplasm. It is found in the nucleus. Functionally, regulatory protein, which plays a central role in chromosome stability, in the p53/TP53 pathway, and DNA repair. Probably acts by blocking the action of key proteins. During the mitosis, it blocks Separase/ESPL1 function, preventing the proteolysis of the cohesin complex and the subsequent segregation of the chromosomes. At the onset of anaphase, it is ubiquitinated, conducting to its destruction and to the liberation of ESPL1. Its function is however not limited to a blocking activity, since it is required to activate ESPL1. Negatively regulates the transcriptional activity and related apoptosis activity of TP53. The negative regulation of TP53 may explain the strong transforming capability of the protein when it is overexpressed. May also play a role in DNA repair via its interaction with Ku, possibly by connecting DNA damage-response pathways with sister chromatid separation. This Gorilla gorilla gorilla (Western lowland gorilla) protein is Securin (PTTG1).